Consider the following 278-residue polypeptide: MITGRTALYGVVGHPVAHSRSPEMQNAAFARLGVDAVYVALPVAPERIDEALRGAHALGFQGLNVTVPHKPRAASLCHALDPVATAVGAANTLRRTRDGWDGFNTDAPACRTLLEAAGVVRGSRALLVGAGGAARAAAWALVQLGTEVRVAARREEAAAELCRDLAAAVPGADLAAADFEDLEAEADAAAVVVNGTSVGLPGHEGRLPPLRFRAAQVVLDFVYGDTELARAARAAGARLVSGEQVLVRQGALAFTIWTGQPAPEADMARALEAREGAR.

Residues Ser-19–Ser-21 and Thr-66 contribute to the shikimate site. Lys-70 acts as the Proton acceptor in catalysis. Residues Asn-91 and Asp-106 each contribute to the shikimate site. NADP(+)-binding positions include Gly-129–Ala-133 and Phe-221. Tyr-223 is a shikimate binding site. Gly-242 lines the NADP(+) pocket.

This sequence belongs to the shikimate dehydrogenase family. Homodimer.

It carries out the reaction shikimate + NADP(+) = 3-dehydroshikimate + NADPH + H(+). It participates in metabolic intermediate biosynthesis; chorismate biosynthesis; chorismate from D-erythrose 4-phosphate and phosphoenolpyruvate: step 4/7. Its function is as follows. Involved in the biosynthesis of the chorismate, which leads to the biosynthesis of aromatic amino acids. Catalyzes the reversible NADPH linked reduction of 3-dehydroshikimate (DHSA) to yield shikimate (SA). The polypeptide is Shikimate dehydrogenase (NADP(+)) (Anaeromyxobacter dehalogenans (strain 2CP-1 / ATCC BAA-258)).